A 407-amino-acid chain; its full sequence is Argininosuccinate synthase (407 aa).

ATP-binding positions include 16-24 and Ala-44; that span reads AYSGGLDTS. 2 residues coordinate L-citrulline: Tyr-96 and Ser-101. Gly-126 serves as a coordination point for ATP. L-aspartate is bound by residues Thr-128, Asn-132, and Asp-133. Asn-132 is a binding site for L-citrulline. Residues Arg-136, Ser-185, Ser-194, Glu-270, and Tyr-282 each contribute to the L-citrulline site.

It belongs to the argininosuccinate synthase family. Type 1 subfamily. In terms of assembly, homotetramer.

The protein resides in the cytoplasm. It carries out the reaction L-citrulline + L-aspartate + ATP = 2-(N(omega)-L-arginino)succinate + AMP + diphosphate + H(+). Its pathway is amino-acid biosynthesis; L-arginine biosynthesis; L-arginine from L-ornithine and carbamoyl phosphate: step 2/3. The polypeptide is Argininosuccinate synthase (Shewanella oneidensis (strain ATCC 700550 / JCM 31522 / CIP 106686 / LMG 19005 / NCIMB 14063 / MR-1)).